The chain runs to 298 residues: MRGLDYKWIEALDAVVYQGSFERAAEHLFVSQSAISQRIKQLEKFLAQPVLIREQPPKPTPIGKKLLGLYRRVRLLEHEILPEIKNDTTTRPVQLSLATNADSLATWLLPALQDVMKTRQVELKLTIYGESRSIEKLKSGEVAGAISLESQAIPNCRADYLGRIDYVCVANPEFYQRYFSEGVNNQTLAKAPAVSYDQYDDLHKKFLTEHFNVRPDSVIHHNISSSEAFLKMALAGVAYCLIPRLQITDELEQGSLIDITPGFLMSYRIYWHHWQLETGVLQEISQAIVNYAQRHLPQ.

In terms of domain architecture, HTH lysR-type spans L4 to T60. The H-T-H motif DNA-binding region spans F21–K40.

It belongs to the LysR transcriptional regulatory family. As to quaternary structure, homodimer.

Its function is as follows. Controls the transcription of genes involved in arginine and lysine metabolism. The polypeptide is HTH-type transcriptional regulator ArgP (Vibrio parahaemolyticus serotype O3:K6 (strain RIMD 2210633)).